Here is a 1086-residue protein sequence, read N- to C-terminus: ATP-dependent helicase/deoxyribonuclease subunit B (1086 aa).

This sequence belongs to the helicase family. AddB/RexB type 2 subfamily. Heterodimer of AddA and RexB. Requires Mg(2+) as cofactor.

The heterodimer acts as both an ATP-dependent DNA helicase and an ATP-dependent, dual-direction single-stranded exonuclease. Recognizes the chi site generating a DNA molecule suitable for the initiation of homologous recombination. This subunit has 5' -&gt; 3' nuclease activity but not helicase activity. In Streptococcus uberis (strain ATCC BAA-854 / 0140J), this protein is ATP-dependent helicase/deoxyribonuclease subunit B.